Here is a 299-residue protein sequence, read N- to C-terminus: ATP phosphoribosyltransferase (299 aa).

Belongs to the ATP phosphoribosyltransferase family. Long subfamily. In terms of assembly, equilibrium between an active dimeric form, an inactive hexameric form and higher aggregates. Interconversion between the various forms is largely reversible and is influenced by the natural substrates and inhibitors of the enzyme. The cofactor is Mg(2+).

The protein localises to the cytoplasm. The catalysed reaction is 1-(5-phospho-beta-D-ribosyl)-ATP + diphosphate = 5-phospho-alpha-D-ribose 1-diphosphate + ATP. The protein operates within amino-acid biosynthesis; L-histidine biosynthesis; L-histidine from 5-phospho-alpha-D-ribose 1-diphosphate: step 1/9. Its activity is regulated as follows. Feedback inhibited by histidine. In terms of biological role, catalyzes the condensation of ATP and 5-phosphoribose 1-diphosphate to form N'-(5'-phosphoribosyl)-ATP (PR-ATP). Has a crucial role in the pathway because the rate of histidine biosynthesis seems to be controlled primarily by regulation of HisG enzymatic activity. This is ATP phosphoribosyltransferase from Buchnera aphidicola subsp. Schlechtendalia chinensis.